The primary structure comprises 219 residues: ATP-dependent Clp protease proteolytic subunit (219 aa).

Residues 1–22 (MPVGVPKVPFLNPNPDPEPDSV) are disordered. Ser116 acts as the Nucleophile in catalysis. His141 is an active-site residue.

This sequence belongs to the peptidase S14 family. Component of the chloroplastic Clp protease core complex.

It is found in the plastid. Its subcellular location is the chloroplast stroma. It carries out the reaction Hydrolysis of proteins to small peptides in the presence of ATP and magnesium. alpha-casein is the usual test substrate. In the absence of ATP, only oligopeptides shorter than five residues are hydrolyzed (such as succinyl-Leu-Tyr-|-NHMec, and Leu-Tyr-Leu-|-Tyr-Trp, in which cleavage of the -Tyr-|-Leu- and -Tyr-|-Trp bonds also occurs).. In terms of biological role, cleaves peptides in various proteins in a process that requires ATP hydrolysis. Has a chymotrypsin-like activity. Plays a major role in the degradation of misfolded proteins. In Pelargonium hortorum (Common geranium), this protein is ATP-dependent Clp protease proteolytic subunit.